Consider the following 273-residue polypeptide: MTTQQLHEQILQKKSFLCVGLDPDLSKIPAHLLETEDPIFEFNKAIIDATHDLTVGYKPNTAFFEAYGIKGWMSLQKTINYINENYPDIFTIADAKRGDIGNTSSMYAKAFFEDLNFDSVTVAPYMGKDSVEPFLAFENKHTIMLALTSNEGAFDFQTLNTNGTELYKQVLETSKTWKNSQNLMYVVGATKAEYFADIRKIVPDSFLLVPGIGAQGGSLSEVCKYGMNDKIGLLVNSARAIIYASKGTDFAEKAREEALKVQQEMAEIIDSKF.

The Proton donor role is filled by lysine 96.

Belongs to the OMP decarboxylase family. Type 2 subfamily.

The enzyme catalyses orotidine 5'-phosphate + H(+) = UMP + CO2. It participates in pyrimidine metabolism; UMP biosynthesis via de novo pathway; UMP from orotate: step 2/2. This chain is Orotidine 5'-phosphate decarboxylase, found in Flavobacterium johnsoniae (strain ATCC 17061 / DSM 2064 / JCM 8514 / BCRC 14874 / CCUG 350202 / NBRC 14942 / NCIMB 11054 / UW101) (Cytophaga johnsonae).